Here is a 295-residue protein sequence, read N- to C-terminus: MSILPIIKGEYKKDYNLKHLTWFKVGGNAEIFFKPFDSADLKSFLIQNNKKLPITTFGSGSNIIIRDGGIEGVVIKLGKNFNNIEFLDNHLIVGSSCLNYNLAKFCQANAISGFEFLVGIPGTIGGGVVMNAGAYGSAFQDIIVQIEALDFLGNFLTFTNKEIGFKYRGNNLPKDLILLKAIFKANKGDSQNILLKMNKINTTRSSTQPIKERTGGSTFKNPVGCKSWELIDKAGLRGYRIGGASMSELHCNFMINNGNATAKDLEDLGNFVRQKVFEDSGVELNWEIKRIGKYV.

Positions 24 to 188 constitute an FAD-binding PCMH-type domain; the sequence is KVGGNAEIFF…LKAIFKANKG (165 aa). Arginine 168 is a catalytic residue. Catalysis depends on serine 217, which acts as the Proton donor. Residue glutamate 287 is part of the active site.

Belongs to the MurB family. It depends on FAD as a cofactor.

It localises to the cytoplasm. The enzyme catalyses UDP-N-acetyl-alpha-D-muramate + NADP(+) = UDP-N-acetyl-3-O-(1-carboxyvinyl)-alpha-D-glucosamine + NADPH + H(+). The protein operates within cell wall biogenesis; peptidoglycan biosynthesis. Functionally, cell wall formation. The protein is UDP-N-acetylenolpyruvoylglucosamine reductase of Rickettsia typhi (strain ATCC VR-144 / Wilmington).